A 1010-amino-acid chain; its full sequence is Antigenic heat-stable 120 kDa protein (1010 aa).

2 disordered regions span residues 1-34 (DTSEFDPLANKEYTEEQKQTLEQEQKEFLSQTTT) and 347-396 (GQSK…QSQQ). The segment covering 12 to 27 (EYTEEQKQTLEQEQKE) has biased composition (basic and acidic residues). Polar residues-rich tracts occupy residues 347–372 (GQSKEQPLITPQQTTSSSVEPPQHKQ) and 379–396 (PTNQPLQPETSQMPQSQQ).

Its subcellular location is the cytoplasm. This is Antigenic heat-stable 120 kDa protein (sca4) from Rickettsia parkeri.